The following is a 104-amino-acid chain: uncharacterized protein (104 aa).

The first 23 residues, 1–23 (MDIHDYVELIALAFWVISVVSVG), serve as a signal peptide directing secretion.

This is an uncharacterized protein from Lactobacillus helveticus (Lactobacillus suntoryeus).